The primary structure comprises 257 residues: MTTNFYTAFPTLGYTAYPQFAFAAATTAPSLTSATTSSTTMAPMAPNSESGRRAGRRERTSFNRGQLDQLEKVFRETQYPDVHRREALAKAINLPDGRVQVITVWFKNRRAKDRNNKKMDGVHPGSTSSRSSNGSPHNESKPDTKSLGIHIPGTPEFNAHSAAKYEANSAVLSQLQQQQQQQLQQPKSELEDSKPLADTKYDSTQSLLPQAQAAAYASYATTAPYPYNYNSYFPSNFYYQQYGSNDYTPNITAYSPL.

Positions 33–49 (SATTSSTTMAPMAPNSE) are enriched in low complexity. Disordered regions lie at residues 33-63 (SATT…TSFN) and 113-156 (DRNN…GTPE). Residues 55–117 (GRRERTSFNR…NRRAKDRNNK (63 aa)) constitute a DNA-binding region (homeobox). Residues 123-137 (HPGSTSSRSSNGSPH) are compositionally biased toward low complexity.

The protein belongs to the paired homeobox family. Interacts with sox-2. Expressed in ASE and AWC chemosensory neurons. Expressed left-right asymmetrically in the embryo, in the grandmother cell and the mother cell to the MI pharyngeal motorneuron but in neither analogous precursors of the e3D neuron.

The protein resides in the nucleus. Its function is as follows. Probable transcription factor, acting as a progenitor identity factor regulating the development of lineally-related embryonic cells including glial, excretory and neuronal cells. Mediates chemosensory function of ASE and AWC neurons. In ASE neurons, required to diversify the fate of the ASEL neurons from the ASER neurons. Acts cell-autonomously to establish a neuronal left right asymmetry, possibly promoting asymmetric expression of the helix-loop-helix proteins ngn-1 and hlh-2. In cooperation with the transcription factor sox-2, required for the differentiation of AWC olfactory neurons. May regulate the expression of sox-2 in AWC olfactory neurons. This Caenorhabditis elegans protein is Homeobox protein ceh-36.